Here is a 586-residue protein sequence, read N- to C-terminus: Penicillin-binding protein activator LpoA (586 aa).

Residues methionine 1–glycine 26 form the signal peptide. A lipid anchor (N-palmitoyl cysteine) is attached at cysteine 27. The S-diacylglycerol cysteine moiety is linked to residue cysteine 27.

It belongs to the LpoA family. Interacts with PBP1a.

It is found in the cell outer membrane. Its function is as follows. Regulator of peptidoglycan synthesis that is essential for the function of penicillin-binding protein 1A (PBP1a). The polypeptide is Penicillin-binding protein activator LpoA (Histophilus somni (strain 2336) (Haemophilus somnus)).